The sequence spans 523 residues: ATP-dependent RNA helicase DBP3 (523 aa).

Residues 1–21 (MTKEEIADKKRKVVDEEVIEK) show a composition bias toward basic and acidic residues. Residues 1-71 (MTKEEIADKK…SEKKPEPTSA (71 aa)) form a disordered region. Basic residues predominate over residues 22-48 (KKSKKHKKDKKDKKEKKDKKHKKHKKE). Over residues 49–67 (KKGEKEVEVPEKESEKKPE) the composition is skewed to basic and acidic residues. Positions 114–140 (LSFDYLSLDSSIQAEISKFPKPTPIQA) match the Q motif motif. Positions 143-315 (WPYLLSGKDV…STFMNNPIKV (173 aa)) constitute a Helicase ATP-binding domain. Position 156 to 163 (156 to 163 (AETGSGKT)) interacts with ATP. The short motif at 262–265 (DEAD) is the DEAD box element. In terms of domain architecture, Helicase C-terminal spans 344 to 493 (KLLELLKKYH…PVPEDLIKFG (150 aa)).

It belongs to the DEAD box helicase family. DDX5/DBP2 subfamily.

The protein resides in the nucleus. Its subcellular location is the nucleolus. It carries out the reaction ATP + H2O = ADP + phosphate + H(+). In terms of biological role, ATP-dependent RNA helicase required for 60S ribosomal subunit synthesis. Involved in efficient pre-rRNA processing, predominantly at site A3, which is necessary for the normal formation of 25S and 5.8S rRNAs. This Saccharomyces cerevisiae (strain ATCC 204508 / S288c) (Baker's yeast) protein is ATP-dependent RNA helicase DBP3 (DBP3).